A 3133-amino-acid polypeptide reads, in one-letter code: Hemocytin (3133 aa).

The region spanning 40–96 (CTGGQQYTVCADSCLRKCSDTALAASGQCKPVCVEGCACSPSQLLDDNGVCVPVAKC) is the TIL 1 domain. Residue Asn151 is glycosylated (N-linked (GlcNAc...) asparagine). The TIL 2 domain maps to 153 to 209 (TAQNMEFTTCETSEPLTCKNMHLPPSTQTAECRPGCQCKKGQVLDTASKRCVPATQC). Residue Asn237 is glycosylated (N-linked (GlcNAc...) asparagine). A VWFD 1 domain is found at 247 to 418 (GVCGAWGDSH…DSWKLKPTCP (172 aa)). 3 disulfides stabilise this stretch: Cys249–Cys380, Cys271–Cys417, and Cys295–Cys302. In terms of domain architecture, TIL 3 spans 509 to 576 (CDEVCSNYDS…TTECVPRAKC (68 aa)). A glycan (N-linked (GlcNAc...) asparagine) is linked at Asn564. The segment at 661–680 (PDGQSVESEPLPKPNELQIG) is disordered. Residues 770-837 (CPPGEVYQAC…ERTCVPVKDC (68 aa)) enclose the TIL 4 domain. The interval 899–924 (STTTTTTTSTTTTTTTPEPTETTTET) is disordered. Intrachain disulfides connect Cys940–Cys1095 and Cys1116–Cys1254. F5/8 type C domains follow at residues 940–1095 (CSPD…IIGC) and 1116–1254 (CTEP…PIGC). Residues Asn1170, Asn1387, Asn1622, Asn1727, and Asn1847 are each glycosylated (N-linked (GlcNAc...) asparagine). The VWFD 2 domain maps to 1619 to 1794 (VFCNMTGRTF…KPGVPADACA (176 aa)). Intrachain disulfides connect Cys1621-Cys1754 and Cys1641-Cys1793. Residues 1890-1948 (CPPPLVHYDCYRKRCEETCAPYPNAARACPAQEGQCSPGCYCPDGKLRKGDQCVLPADC) form the TIL 5 domain. One can recognise a VWFD 3 domain in the interval 1951–2136 (CTCTGVGTPA…WQASPEKLTE (186 aa)). 2 cysteine pairs are disulfide-bonded: Cys1953-Cys2099 and Cys2001-Cys2009. Asn1975 and Asn1985 each carry an N-linked (GlcNAc...) asparagine glycan. Asn2093, Asn2113, Asn2161, Asn2276, and Asn2451 each carry an N-linked (GlcNAc...) asparagine glycan. The TIL 6 domain occupies 2229-2285 (CEEPFVYRACVDCERTCDNYEQLQTSPEKCTNKPVEGCFCPEGKVRVNNTCIEPGKC). The VWFC 1 domain occupies 2553–2622 (VACRHQDNVY…DSGQCCGKCE (70 aa)). Residues Asn2647, Asn2654, Asn2663, Asn2794, Asn2810, Asn2865, Asn2929, Asn2964, and Asn3028 are each glycosylated (N-linked (GlcNAc...) asparagine). The 66-residue stretch at 2842 to 2907 (VACRDGDKIY…AADHCCGRCV (66 aa)) folds into the VWFC 2 domain. 4 cysteine pairs are disulfide-bonded: Cys2971–Cys3040, Cys2991–Cys3054, Cys3004–Cys3070, and Cys3020–Cys3072. Residues 2971 to 3076 (CNEKPQALSK…PARCHCAACG (106 aa)) form the CTCK domain.

Post-translationally, may be converted into the 260 kDa mature hemocytin by proteolysis.

Functionally, adhesive protein and relates to hemostasis or encapsulation of foreign substances for self-defense. The chain is Hemocytin from Bombyx mori (Silk moth).